Consider the following 136-residue polypeptide: Histone H3.1/H3.2 (136 aa).

Residues 1–43 form a disordered region; the sequence is MARTKQTARKSTGGKAPRKQLASKAARKSAPSTGGVKKPHRYK. Position 5 is an N6,N6,N6-trimethyllysine; alternate (lysine 5). Residue lysine 5 is modified to N6,N6-dimethyllysine; alternate. An N6-methyllysine; alternate mark is found at lysine 5 and lysine 10. Lysine 10 carries the N6-acetyllysine; alternate modification. Serine 11 carries the post-translational modification Phosphoserine. Lysine 15 is modified (N6,N6-dimethyllysine; alternate). Lysine 15, lysine 19, lysine 24, lysine 28, and lysine 37 each carry N6-acetyllysine; alternate. N6-methyllysine; alternate is present on residues lysine 19, lysine 24, lysine 28, and lysine 37. Lysine 28 and lysine 37 each carry N6,N6,N6-trimethyllysine; alternate. Residues lysine 28 and lysine 37 each carry the N6,N6-dimethyllysine; alternate modification. N6-acetyllysine occurs at positions 57 and 65. Lysine 80 is modified (N6,N6,N6-trimethyllysine; alternate). The residue at position 80 (lysine 80) is an N6,N6-dimethyllysine; alternate. Lysine 80 is subject to N6-methyllysine; alternate.

Belongs to the histone H3 family. In terms of assembly, the nucleosome is a histone octamer containing two molecules each of H2A, H2B, H3 and H4 assembled in one H3-H4 heterotetramer and two H2A-H2B heterodimers. The octamer wraps approximately 147 bp of DNA. Phosphorylated to form H3S10ph. H3S10ph promotes subsequent H3K14ac formation and is required for transcriptional activation through TBP recruitment to the promoters. In terms of processing, mono-, di- and trimethylated by the COMPASS complex to form H3K4me1/2/3. H3K4me activates gene expression by regulating transcription elongation and plays a role in telomere length maintenance. H3K4me enrichment correlates with transcription levels, and occurs in a 5' to 3' gradient with H3K4me3 enrichment at the 5'-end of genes, shifting to H3K4me2 and then H3K4me1. Methylated by SET2 to form H3K36me. H3K36me represses gene expression. Methylated by DOT1 to form H3K79me. H3K79me is required for association of SIR proteins with telomeric regions and for telomeric silencing. The COMPASS-mediated formation of H3K4me2/3 and the DOT1-mediated formation of H3K79me require H2BK123ub1. Post-translationally, acetylation of histone H3 leads to transcriptional activation. H3K14ac formation by GCN5 is promoted by H3S10ph. H3K14ac can also be formed by ESA1. H3K56ac formation occurs predominantly in newly synthesized H3 molecules during G1, S and G2/M of the cell cycle and may be involved in DNA repair.

It localises to the nucleus. It is found in the chromosome. Its function is as follows. Core component of nucleosome. Nucleosomes wrap and compact DNA into chromatin, limiting DNA accessibility to the cellular machineries which require DNA as a template. Histones thereby play a central role in transcription regulation, DNA repair, DNA replication and chromosomal stability. DNA accessibility is regulated via a complex set of post-translational modifications of histones, also called histone code, and nucleosome remodeling. The sequence is that of Histone H3.1/H3.2 (HHT1) from Lodderomyces elongisporus (strain ATCC 11503 / CBS 2605 / JCM 1781 / NBRC 1676 / NRRL YB-4239) (Yeast).